Reading from the N-terminus, the 144-residue chain is Granulocyte-macrophage colony-stimulating factor (144 aa).

Residues 1-17 form the signal peptide; the sequence is MWLQNLLFLNTVVCSIS. O-linked (GalNAc...) serine glycosylation is found at Ser-22 and Ser-24. Thr-27 carries O-linked (GalNAc...) threonine glycosylation. N-linked (GlcNAc...) asparagine glycans are attached at residues Asn-44, Asn-45, and Asn-54. 2 disulfide bridges follow: Cys-71/Cys-113 and Cys-105/Cys-138.

The protein belongs to the GM-CSF family. As to quaternary structure, monomer. The signaling GM-CSF receptor complex is a dodecamer of two head-to-head hexamers of two alpha, two beta, and two ligand subunits.

The protein localises to the secreted. Its function is as follows. Cytokine that stimulates the growth and differentiation of hematopoietic precursor cells from various lineages, including granulocytes, macrophages, eosinophils and erythrocytes. In Felis catus (Cat), this protein is Granulocyte-macrophage colony-stimulating factor (CSF2).